Here is a 391-residue protein sequence, read N- to C-terminus: Lipid-A-disaccharide synthase (391 aa).

This sequence belongs to the LpxB family.

The enzyme catalyses a lipid X + a UDP-2-N,3-O-bis[(3R)-3-hydroxyacyl]-alpha-D-glucosamine = a lipid A disaccharide + UDP + H(+). It participates in bacterial outer membrane biogenesis; LPS lipid A biosynthesis. Functionally, condensation of UDP-2,3-diacylglucosamine and 2,3-diacylglucosamine-1-phosphate to form lipid A disaccharide, a precursor of lipid A, a phosphorylated glycolipid that anchors the lipopolysaccharide to the outer membrane of the cell. The polypeptide is Lipid-A-disaccharide synthase (Aromatoleum aromaticum (strain DSM 19018 / LMG 30748 / EbN1) (Azoarcus sp. (strain EbN1))).